The chain runs to 473 residues: uncharacterized protein (473 aa).

An N-terminal signal peptide occupies residues 1-19 (MIRAFLVFPYLYILVQSNG).

This is an uncharacterized protein from Methanocaldococcus jannaschii (strain ATCC 43067 / DSM 2661 / JAL-1 / JCM 10045 / NBRC 100440) (Methanococcus jannaschii).